Here is a 148-residue protein sequence, read N- to C-terminus: MKLILTQEVPGLGSPGDIVEVANGYGRNYLVPRRYAILATKGAERQVEQIKRARSARAVRDLGHAQEIAGQLGGLKVELTSRAGKEGRLFGSVTAADVVEAVTAAGGPELDRRRVELTTPIKSLGAYTVAVHLHPEVTATVKLQVTQA.

It belongs to the bacterial ribosomal protein bL9 family.

Its function is as follows. Binds to the 23S rRNA. The protein is Large ribosomal subunit protein bL9 of Frankia casuarinae (strain DSM 45818 / CECT 9043 / HFP020203 / CcI3).